Consider the following 98-residue polypeptide: Large ribosomal subunit protein uL23 (98 aa).

The protein belongs to the universal ribosomal protein uL23 family. As to quaternary structure, part of the 50S ribosomal subunit. Contacts protein L29, and trigger factor when it is bound to the ribosome.

Functionally, one of the early assembly proteins it binds 23S rRNA. One of the proteins that surrounds the polypeptide exit tunnel on the outside of the ribosome. Forms the main docking site for trigger factor binding to the ribosome. This is Large ribosomal subunit protein uL23 from Cereibacter sphaeroides (strain ATCC 17029 / ATH 2.4.9) (Rhodobacter sphaeroides).